A 326-amino-acid chain; its full sequence is Phospho-N-acetylmuramoyl-pentapeptide-transferase (326 aa).

A run of 10 helical transmembrane segments spans residues 13-33 (ILAPLIMGFLFSIVLGPIFIP), 57-77 (GTPTMGGLIFFIATATAILIM), 85-105 (EMILLYSFLAFGFIGFLDDIL), 121-141 (MILLVLFSVALAWYGYTNVGT), 155-175 (NLGILYIPFIVVYYAAVTNAV), 181-201 (IDGLATSVTVIVLTFFAIIGF), 208-228 (VAVFAIALAGALLGFLKFNAF), 232-252 (IFMGDTGSLALGGVIGTIALM), 257-277 (LFVIIVGGIYLIETLSVIIQV), and 305-325 (VKIVTIFSSITAILCIIGFVA).

This sequence belongs to the glycosyltransferase 4 family. MraY subfamily. It depends on Mg(2+) as a cofactor.

The protein resides in the cell membrane. The enzyme catalyses UDP-N-acetyl-alpha-D-muramoyl-L-alanyl-gamma-D-glutamyl-meso-2,6-diaminopimeloyl-D-alanyl-D-alanine + di-trans,octa-cis-undecaprenyl phosphate = di-trans,octa-cis-undecaprenyl diphospho-N-acetyl-alpha-D-muramoyl-L-alanyl-D-glutamyl-meso-2,6-diaminopimeloyl-D-alanyl-D-alanine + UMP. Its pathway is cell wall biogenesis; peptidoglycan biosynthesis. Catalyzes the initial step of the lipid cycle reactions in the biosynthesis of the cell wall peptidoglycan: transfers peptidoglycan precursor phospho-MurNAc-pentapeptide from UDP-MurNAc-pentapeptide onto the lipid carrier undecaprenyl phosphate, yielding undecaprenyl-pyrophosphoryl-MurNAc-pentapeptide, known as lipid I. The polypeptide is Phospho-N-acetylmuramoyl-pentapeptide-transferase (Clostridium beijerinckii (strain ATCC 51743 / NCIMB 8052) (Clostridium acetobutylicum)).